The sequence spans 491 residues: 23S rRNA (uracil(1939)-C(5))-methyltransferase RlmD (491 aa).

Basic and acidic residues predominate over residues Met-1–Ile-10. Positions Met-1–Pro-28 are disordered. The TRAM domain maps to Ala-18–Ala-81. Cys-94, Cys-104, Cys-107, and Cys-186 together coordinate [4Fe-4S] cluster. S-adenosyl-L-methionine is bound by residues Gln-294, Phe-323, Asn-328, Glu-344, Asn-379, and Asp-400. Residue Cys-447 is the Nucleophile of the active site.

Belongs to the class I-like SAM-binding methyltransferase superfamily. RNA M5U methyltransferase family. RlmD subfamily.

The enzyme catalyses uridine(1939) in 23S rRNA + S-adenosyl-L-methionine = 5-methyluridine(1939) in 23S rRNA + S-adenosyl-L-homocysteine + H(+). Its function is as follows. Catalyzes the formation of 5-methyl-uridine at position 1939 (m5U1939) in 23S rRNA. The chain is 23S rRNA (uracil(1939)-C(5))-methyltransferase RlmD from Paracidovorax citrulli (strain AAC00-1) (Acidovorax citrulli).